A 128-amino-acid polypeptide reads, in one-letter code: Large ribosomal subunit protein bL12 (128 aa).

It belongs to the bacterial ribosomal protein bL12 family. As to quaternary structure, homodimer. Part of the ribosomal stalk of the 50S ribosomal subunit. Forms a multimeric L10(L12)X complex, where L10 forms an elongated spine to which 2 to 4 L12 dimers bind in a sequential fashion. Binds GTP-bound translation factors.

Forms part of the ribosomal stalk which helps the ribosome interact with GTP-bound translation factors. Is thus essential for accurate translation. This Aquifex aeolicus (strain VF5) protein is Large ribosomal subunit protein bL12.